The following is a 98-amino-acid chain: Co-chaperonin GroES (98 aa).

Belongs to the GroES chaperonin family. As to quaternary structure, heptamer of 7 subunits arranged in a ring. Interacts with the chaperonin GroEL.

It is found in the cytoplasm. Its function is as follows. Together with the chaperonin GroEL, plays an essential role in assisting protein folding. The GroEL-GroES system forms a nano-cage that allows encapsulation of the non-native substrate proteins and provides a physical environment optimized to promote and accelerate protein folding. GroES binds to the apical surface of the GroEL ring, thereby capping the opening of the GroEL channel. In Allorhizobium ampelinum (strain ATCC BAA-846 / DSM 112012 / S4) (Agrobacterium vitis (strain S4)), this protein is Co-chaperonin GroES.